We begin with the raw amino-acid sequence, 114 residues long: Non-specific lipid-transfer protein 2 (114 aa).

An N-terminal signal peptide occupies residues 1–23; it reads MEMFGKIACFVVFCMVVVAPHAE. 4 cysteine pairs are disulfide-bonded: cysteine 27/cysteine 73, cysteine 37/cysteine 50, cysteine 51/cysteine 96, and cysteine 71/cysteine 110.

This sequence belongs to the plant LTP family.

In terms of biological role, plant non-specific lipid-transfer proteins transfer phospholipids as well as galactolipids across membranes. May play a role in wax or cutin deposition in the cell walls of expanding epidermal cells and certain secretory tissues. The chain is Non-specific lipid-transfer protein 2 (LE16) from Solanum lycopersicum (Tomato).